The primary structure comprises 173 residues: Protein GrpE (173 aa).

Residues Met1 to Glu28 show a composition bias toward basic and acidic residues. Positions Met1–Leu30 are disordered.

This sequence belongs to the GrpE family. Homodimer.

The protein resides in the cytoplasm. Participates actively in the response to hyperosmotic and heat shock by preventing the aggregation of stress-denatured proteins, in association with DnaK and GrpE. It is the nucleotide exchange factor for DnaK and may function as a thermosensor. Unfolded proteins bind initially to DnaJ; upon interaction with the DnaJ-bound protein, DnaK hydrolyzes its bound ATP, resulting in the formation of a stable complex. GrpE releases ADP from DnaK; ATP binding to DnaK triggers the release of the substrate protein, thus completing the reaction cycle. Several rounds of ATP-dependent interactions between DnaJ, DnaK and GrpE are required for fully efficient folding. The polypeptide is Protein GrpE (Methanosphaera stadtmanae (strain ATCC 43021 / DSM 3091 / JCM 11832 / MCB-3)).